The sequence spans 66 residues: MTEFPKIIMILGAVLLIIGAVLHFVGKMPGDIFVKKGNVTFFFPVVTCIIISVVLSILLNLFGRMK.

Transmembrane regions (helical) follow at residues 6–26 (KIIM…HFVG) and 39–59 (VTFF…SILL).

The protein localises to the cell membrane. This is an uncharacterized protein from Bacillus subtilis (strain 168).